The chain runs to 461 residues: Glycine--tRNA ligase (461 aa).

Substrate contacts are provided by Arg100 and Glu163. Residues 195-197 (RNE), 205-210 (FRTREF), 282-283 (EL), and 326-329 (GLGR) contribute to the ATP site. 210–214 (FEQME) lines the substrate pocket. 322–326 (EPAAG) serves as a coordination point for substrate.

This sequence belongs to the class-II aminoacyl-tRNA synthetase family. As to quaternary structure, homodimer.

The protein localises to the cytoplasm. It catalyses the reaction tRNA(Gly) + glycine + ATP = glycyl-tRNA(Gly) + AMP + diphosphate. Functionally, catalyzes the attachment of glycine to tRNA(Gly). The protein is Glycine--tRNA ligase of Corynebacterium glutamicum (strain ATCC 13032 / DSM 20300 / JCM 1318 / BCRC 11384 / CCUG 27702 / LMG 3730 / NBRC 12168 / NCIMB 10025 / NRRL B-2784 / 534).